The following is a 111-amino-acid chain: Putative gamma-glutamylcyclotransferase BH1612 (111 aa).

Substrate is bound at residue 14 to 17 (YGHL). Residue glutamate 55 is the Proton acceptor of the active site.

This sequence belongs to the gamma-glutamylcyclotransferase family.

Functionally, putative gamma-glutamylcyclotransferase. The sequence is that of Putative gamma-glutamylcyclotransferase BH1612 from Halalkalibacterium halodurans (strain ATCC BAA-125 / DSM 18197 / FERM 7344 / JCM 9153 / C-125) (Bacillus halodurans).